Consider the following 261-residue polypeptide: Histone H1-I (261 aa).

Residues 1-22 are compositionally biased toward low complexity; it reads MSETEAAPVVAPAAEAAPAAEA. Disordered stretches follow at residues 1–63 and 125–261; these read MSET…PPYI and FKLS…KGKK. Basic and acidic residues predominate over residues 41–50; it reads APKEPKAPKE. Residues 58–129 form the H15 domain; sequence THPPYIEMVK…KVKGSFKLSE (72 aa). Residues 133–142 show a composition bias toward basic residues; it reads AKAKKSTPKK. 2 tandem repeats follow at residues 136–140 and 188–192. A 7 X 5 AA repeats of K-K-[AS]-T-P region spans residues 136 to 250; it reads KKSTPKKAKA…KKAPAKKSTP (115 aa). A DNA-binding region spans residues 139 to 142; the sequence is TPKK. Over residues 143-198 the composition is skewed to basic and acidic residues; the sequence is AKADGEAKPKKSEAKPKKAEAVKKTKAPKEKVERPKKEKKEKVEKKKATPKAEKPK. Residues 199-203 form a 3; approximate repeat; the sequence is KAATP. A run of 4 repeats spans residues 209-213, 230-234, 236-240, and 246-250. A compositionally biased stretch (basic residues) spans 227-250; it reads AKPKKATPSKKAAPKKAPAKKSTP. Residues 251–261 are compositionally biased toward basic and acidic residues; sequence KAKEAKSKGKK.

Belongs to the histone H1/H5 family.

Its subcellular location is the nucleus. The protein localises to the chromosome. In terms of biological role, histones H1 are necessary for the condensation of nucleosome chains into higher-order structures. This is Histone H1-I (H1-I) from Volvox carteri (Green alga).